Consider the following 169-residue polypeptide: Zinc metalloproteinase-disintegrin-like mikarin (169 aa).

The 44-residue stretch at 14-57 folds into the Peptidase M12B domain; sequence KYLEYVVVDNNMYRNYGNAGPCVMSAEISFEPLQEFSSCDIQEP. The Disintegrin domain maps to 65–129; that stretch reads PAVCGNYYVE…PEICTGRSAK (65 aa). Intrachain disulfides connect Cys68/Cys97, Cys79/Cys92, Cys81/Cys87, Cys105/Cys111, Cys110/Cys123, and Cys150/Cys161. Positions 116 to 118 match the D/ECD-tripeptide motif; sequence DCD.

Belongs to the venom metalloproteinase (M12B) family. P-III subfamily. P-IIIa sub-subfamily. In terms of assembly, monomer. Requires Zn(2+) as cofactor. In terms of tissue distribution, expressed by the venom gland.

It is found in the secreted. Inhibited by EDTA, but not by PMSF. Its function is as follows. Snake venom zinc metalloproteinase that calcium-independently catalyzes the conversion of prothrombin (F2) to alpha-thrombin through the formation of a thrombin intermediate. This chain is Zinc metalloproteinase-disintegrin-like mikarin, found in Micropechis ikaheca (New Guinean small-eyed snake).